A 237-amino-acid polypeptide reads, in one-letter code: Orotidine 5'-phosphate decarboxylase (237 aa).

Residues Asp10, Lys32, 59–68 (DLKLHDIPNT), Thr118, Arg180, Gln189, Gly209, and Arg210 contribute to the substrate site. The active-site Proton donor is the Lys61.

The protein belongs to the OMP decarboxylase family. Type 1 subfamily. In terms of assembly, homodimer.

The enzyme catalyses orotidine 5'-phosphate + H(+) = UMP + CO2. The protein operates within pyrimidine metabolism; UMP biosynthesis via de novo pathway; UMP from orotate: step 2/2. In terms of biological role, catalyzes the decarboxylation of orotidine 5'-monophosphate (OMP) to uridine 5'-monophosphate (UMP). The protein is Orotidine 5'-phosphate decarboxylase of Fusobacterium nucleatum subsp. nucleatum (strain ATCC 25586 / DSM 15643 / BCRC 10681 / CIP 101130 / JCM 8532 / KCTC 2640 / LMG 13131 / VPI 4355).